The primary structure comprises 169 residues: Tumor suppressor ARF (169 aa).

The segment at 1–63 (MGRRFLVTVR…RRGPHRNPGP (63 aa)) is interaction with CDK5RAP3 and MDM2. The interval 54–73 (RRGPHRNPGPGDDDGQRSRS) is disordered.

As to quaternary structure, does not interact with cyclins, CDK1, CDK2, CDK4, CDK5 or CDK6. Interacts with COMMD1. Binds to BCL6, E2F1, HUWE1, MDM2, MYC, NPM1/B23, TOP1/TOPOI and UBE2I/UBC9. Interacts with TBRG1. Interacts with CDKN2AIP and E4F1. Interacts with CDK5RAP3 and MDM2; form a ternary complex involved in regulation of p53/TP53. Interacts with NOP53; the interaction is direct and promotes ARF nucleoplasmic relocalization and ubiquitin-mediated proteasomal degradation. Interacts with TTF1 (via the N-terminal region (NRD) and a C-terminal region); the interaction is direct and inhibits the nucleolar localization of TTF1. In terms of assembly, interacts with C1QBP. In terms of processing, ubiquitinated in normal cells by TRIP12 via the ubiquitin fusion degradation (UFD) pathway, a process that mediates ubiquitination at the N-terminus, regardless of the absence of lysine residues. Ubiquitination leads to its proteasomal degradation. In cancer cells, however, TRIP12 is located in a different cell compartment, preventing ubiquitination and degradation.

It is found in the nucleus. Its subcellular location is the nucleolus. It localises to the nucleoplasm. The protein localises to the mitochondrion. In terms of biological role, capable of inducing cell cycle arrest in G1 and G2 phases. Acts as a tumor suppressor. Binds to MDM2 and blocks its nucleocytoplasmic shuttling by sequestering it in the nucleolus. This inhibits the oncogenic action of MDM2 by blocking MDM2-induced degradation of p53 and enhancing p53-dependent transactivation and apoptosis. Also induces G2 arrest and apoptosis in a p53-independent manner by preventing the activation of cyclin B1/CDC2 complexes. Binds to BCL6 and down-regulates BCL6-induced transcriptional repression. Binds to E2F1 and MYC and blocks their transcriptional activator activity but has no effect on MYC transcriptional repression. Binds to TOP1/TOPOI and stimulates its activity. This complex binds to rRNA gene promoters and may play a role in rRNA transcription and/or maturation. Interacts with NPM1/B23 and promotes its polyubiquitination and degradation, thus inhibiting rRNA processing. Plays a role in inhibiting ribosome biogenesis, perhaps by binding to the nucleolar localization sequence of transcription termination factor TTF1, and thereby preventing nucleolar localization of TTF1. Interacts with COMMD1 and promotes its 'Lys63'-linked polyubiquitination. Interacts with UBE2I/UBC9 and enhances sumoylation of a number of its binding partners including MDM2 and E2F1. Binds to HUWE1 and represses its ubiquitin ligase activity. May play a role in controlling cell proliferation and apoptosis during mammary gland development. May be involved in regulation of autophagy and caspase-independent cell death; the short-lived mitochondrial isoform is stabilized by C1QBP. This chain is Tumor suppressor ARF, found in Mus musculus (Mouse).